The chain runs to 223 residues: MIF4G domain-containing protein B (223 aa).

Residues 9-206 (DYKIQGFDAD…LEMIEYRAAG (198 aa)) form the MIF4G domain.

It belongs to the MIF4GD family. In terms of assembly, interacts with eif4g1, eif4g2 and slbp; probably tethered by SLBP to the 3'-end of mRNAs ending with the histone stem-loop, it also interacts with eif4g1 which is bound to their 5'-end.

It localises to the cytoplasm. It is found in the nucleus. Functions in replication-dependent translation of histone mRNAs which differ from other eukaryotic mRNAs in that they do not end with a poly-A tail but a stem-loop. May participate in circularizing those mRNAs specifically enhancing their translation. This is MIF4G domain-containing protein B (mif4gd-b) from Xenopus laevis (African clawed frog).